The chain runs to 82 residues: UPF0154 protein SMU_1719c (82 aa).

A helical transmembrane segment spans residues 4-24 (FLWILLVIIALLAGLVGGTFI).

The protein belongs to the UPF0154 family.

The protein localises to the membrane. In Streptococcus mutans serotype c (strain ATCC 700610 / UA159), this protein is UPF0154 protein SMU_1719c.